The primary structure comprises 424 residues: Gamma-glutamyl phosphate reductase (424 aa).

Residues Met-1–Ala-27 are disordered.

It belongs to the gamma-glutamyl phosphate reductase family.

It localises to the cytoplasm. The enzyme catalyses L-glutamate 5-semialdehyde + phosphate + NADP(+) = L-glutamyl 5-phosphate + NADPH + H(+). The protein operates within amino-acid biosynthesis; L-proline biosynthesis; L-glutamate 5-semialdehyde from L-glutamate: step 2/2. Catalyzes the NADPH-dependent reduction of L-glutamate 5-phosphate into L-glutamate 5-semialdehyde and phosphate. The product spontaneously undergoes cyclization to form 1-pyrroline-5-carboxylate. The chain is Gamma-glutamyl phosphate reductase from Mycolicibacterium smegmatis (strain ATCC 700084 / mc(2)155) (Mycobacterium smegmatis).